The primary structure comprises 215 residues: Small ribosomal subunit protein uS3 (215 aa).

A KH type-2 domain is found at 39-109 (IRKFIKKRLE…EVLVDVKEVK (71 aa)).

Belongs to the universal ribosomal protein uS3 family. Part of the 30S ribosomal subunit. Forms a tight complex with proteins S10 and S14.

In terms of biological role, binds the lower part of the 30S subunit head. Binds mRNA in the 70S ribosome, positioning it for translation. The polypeptide is Small ribosomal subunit protein uS3 (Methylacidiphilum infernorum (isolate V4) (Methylokorus infernorum (strain V4))).